The following is a 292-amino-acid chain: Potassium channel, subfamily K, member 16 (292 aa).

Over 1–13 (MPRAGVCGCWGGQ) the chain is Cytoplasmic. The chain crosses the membrane as a helical span at residues 14-34 (VLPLLLAYICYLLLGATIFQL). Positions 98-116 (SFFFAGTVVTTIGYGNLAP) form an intramembrane region, pore-forming. K(+)-binding residues include Thr108, Ile109, Gly110, and Tyr111. The tract at residues 108-113 (TIGYGN) is selectivity filter 1. A helical transmembrane segment spans residues 120–140 (AGQVFCVFYALMGIPLNVVFL). The Cytoplasmic portion of the chain corresponds to 141–165 (NHLGTGLRAHLTTLDRWEDHPRHSQ). The chain crosses the membrane as a helical span at residues 166–186 (LLQVLGLALFLTLGTLVILIF). An intramembrane region (pore-forming) is located at residues 202-221 (GFYFAFITLSTIGFGDYVVG). The K(+) site is built by Thr212, Ile213, Gly214, and Phe215. Positions 212 to 217 (TIGFGD) are selectivity filter 2. Residues 238–258 (IWILLGLAWLAVVLSLGSLLL) form a helical membrane-spanning segment. The Cytoplasmic portion of the chain corresponds to 259 to 292 (HRCSRLWQLIRGLDLKDGAAPDSEPRSQKIPISA).

This sequence belongs to the two pore domain potassium channel (TC 1.A.1.8) family. As to quaternary structure, homodimer; disulfide-linked. Heterodimer with KCNK17 and KCNK5. As to expression, expressed in pacreatic beta-cells (at protein level). Expressed in pacreatic delta-cells (at protein level).

It is found in the cell membrane. The protein localises to the endoplasmic reticulum membrane. It localises to the mitochondrion inner membrane. It catalyses the reaction K(+)(in) = K(+)(out). It carries out the reaction Rb(+)(in) = Rb(+)(out). The catalysed reaction is Cs(+)(in) = Cs(+)(out). Functionally, k(+) channel that conducts voltage-dependent outward rectifying currents upon membrane depolarization. Voltage sensing is coupled to K(+) electrochemical gradient in an 'ion flux gating' mode where outward but not inward ion flow opens the gate. Homo- and heterodimerizes to form functional channels with distinct regulatory and gating properties. In pancreatic islets, conducts K(+) countercurrents for Ca(2+) release from the endoplasmic reticulum (ER) and regulates the frequency and duration of cytosolic Ca(2+) oscillations coupled to secretion of pancreatic hormones. In pancreatic beta cells, drives ER Ca(2+) efflux, which in turn activates Ca(2+)-dependent plasma membrane K(+) slow currents and cytosolic Ca(2+) influx, overall contributing to synchronous cytosolic Ca(2+) oscillations. Limits glucose-induced cytosolic Ca(2+) oscillations coupled to second-phase INS secretion. Contributes to beta cell adaptation to acute inflammation by maintaining normal cytosolic Ca(2+) levels and INS secretion. May regulate beta cell mitochondrial Ca(2+) levels either indirectly via ER Ca(2+) efflux or directly by hyperpolarizing the mitochondrial membrane potential. Limits mitochondrial Ca(2+) oscillations and ATP production involved in glucose homeostasis upon metabolic stress. In pancreatic delta cells, limits Ca(2+)-induced Ca(2+)-release involved in somatostatin secretion and modulates islet paracrine signaling involved in glucagon secretion. Permeable to other monovalent cations such as Rb(+) and Cs(+). This Mus musculus (Mouse) protein is Potassium channel, subfamily K, member 16.